Consider the following 417-residue polypeptide: 26S proteasome regulatory subunit RPN14 (417 aa).

WD repeat units follow at residues 134–173 (AHVSEITKLKFFPSGEALISSSQDMQLKIWSVKDGSNPRT), 176–215 (GHRATVTDIAIIDRGRNVLSASLDGTIRLWECGTGTTIHT), 242–281 (ISTSKKNNLEFGTYGKYVIAGHVSGVITVHNVFSKEQTIQ), 285–325 (KFTC…CPVG), 330–371 (NEGT…PAIE), and 380–416 (SNDDEVSQFCYVSDDESNGEVLEVGKNNFCALYNLSN).

The protein belongs to the WD repeat PAAF1/RPN14 family. Associates with the 19S proteasome regulatory particle (RP). Interacts directly with RPT5 and RPT6.

It localises to the cytoplasm. The protein resides in the nucleus. Functionally, acts as a regulatory subunit of the 26 proteasome which is involved in the ATP-dependent degradation of ubiquitinated proteins. Is not a genuine component of the 26S proteasome, but an auxiliary factor that interacts with the proteasomal ATPase of 19S regulatory particle (RP). Acts as a chaperone which regulates the highly structured assembly of the 19S regulatory particle. Involved in the substrate specificity of the 26S proteasome and is especially involved in the degradation of ubiquitinated GCN4. May contribute to the stability of the 26S proteasome in some stress conditions. The protein is 26S proteasome regulatory subunit RPN14 (RPN14) of Saccharomyces cerevisiae (strain ATCC 204508 / S288c) (Baker's yeast).